We begin with the raw amino-acid sequence, 264 residues long: Indole-3-glycerol phosphate synthase (264 aa).

The protein belongs to the TrpC family.

The enzyme catalyses 1-(2-carboxyphenylamino)-1-deoxy-D-ribulose 5-phosphate + H(+) = (1S,2R)-1-C-(indol-3-yl)glycerol 3-phosphate + CO2 + H2O. The protein operates within amino-acid biosynthesis; L-tryptophan biosynthesis; L-tryptophan from chorismate: step 4/5. The protein is Indole-3-glycerol phosphate synthase of Polaromonas sp. (strain JS666 / ATCC BAA-500).